We begin with the raw amino-acid sequence, 3063 residues long: Genome polyprotein (3063 aa).

A Peptidase S30 domain is found at 141-284; the sequence is KLTEGQMNHL…QSILNSMIQF (144 aa). Catalysis depends on for P1 proteinase activity residues histidine 192, aspartate 201, and serine 235. The Involved in interaction with stylet and aphid transmission motif lies at 334–337; it reads KITC. The Involved in virions binding and aphid transmission motif lies at 592–594; it reads PTK. Residues 618 to 740 form the Peptidase C6 domain; the sequence is LYIAKQGYCY…ESDIKHYRVG (123 aa). Catalysis depends on for helper component proteinase activity residues cysteine 626 and histidine 699. A Helicase ATP-binding domain is found at 1229–1381; it reads DIAHSEHLDF…TQQPVKLIVE (153 aa). ATP is bound at residue 1242–1249; that stretch reads GAVGSGKS. Residues 1331 to 1334 carry the DECH box motif; that stretch reads DECH. Residues 1400–1559 enclose the Helicase C-terminal domain; that stretch reads DVVQFGSNVL…NLPVMTGGVS (160 aa). The short motif at 1884-1892 is the Nuclear localization signal element; the sequence is RKKGKGKGT. Tyrosine 1907 is subject to O-(5'-phospho-RNA)-tyrosine. The interaction with host EIF4E stretch occupies residues 1949–1964; sequence KMVENDDIEMQALGSN. In terms of domain architecture, Peptidase C4 spans 2032-2250; that stretch reads AKSLMRGLRD…VLWGPLKLKD (219 aa). Catalysis depends on for nuclear inclusion protein A activity residues histidine 2077, aspartate 2112, and cysteine 2182. A RdRp catalytic domain is found at 2519 to 2643; it reads WVYCDADGSQ…AVNPEKESIL (125 aa). The segment at 2798 to 2841 is disordered; it reads NDTIDAGGSNKKDAKPEQGSIQPNPNKGKDKDVNAGTSGTHTVP. Threonine 3046 carries the phosphothreonine modification.

The protein belongs to the potyviridae genome polyprotein family. As to quaternary structure, interacts with host eIF4E protein (via cap-binding region); this interaction mediates the translation of the VPg-viral RNA conjugates. Part of a complex that comprises VPg, RNA, host EIF4E and EIF4G; this interaction mediates the translation of the VPg-viral RNA conjugates. Interaction is possible in susceptible hosts but impaired in resistant plants: the VPg of strain LYE84 interacts with tomato eIF4E1 and eIF4E2 as well as with the Capsicum annuum eIF4E1 susceptible allele pvr2(+) but not with resistant alleles pvr2(1), pvr2(2), pvr2(3), pvr2(4), pvr2(5), pvr2(6), pvr2(7), pvr2(8) and pvr2(9), the VPg of strain SON41 interacts with C.annuum eIF4E1 susceptible alleles pvr2(+), pvr2(1), pvr2(2), pvr2(3) and pvr2(4) but not with resistant alleles pvr2(5), pvr2(6), pvr2(7), pvr2(8) and pvr2(9), the VPg of strain LYE90 interacts only with tomato eIF4E1. Post-translationally, VPg is uridylylated by the polymerase and is covalently attached to the 5'-end of the genomic RNA. This uridylylated form acts as a nucleotide-peptide primer for the polymerase. In terms of processing, potyviral RNA is expressed as two polyproteins which undergo post-translational proteolytic processing. Genome polyprotein is processed by NIa-pro, P1 and HC-pro proteinases resulting in the production of at least ten individual proteins. P3N-PIPO polyprotein is cleaved by P1 and HC-pro proteinases resulting in the production of three individual proteins. The P1 proteinase and the HC-pro cleave only their respective C-termini autocatalytically. 6K1 is essential for proper proteolytic separation of P3 from CI.

Its subcellular location is the host cytoplasmic vesicle. The protein localises to the host nucleus. It is found in the virion. It catalyses the reaction RNA(n) + a ribonucleoside 5'-triphosphate = RNA(n+1) + diphosphate. The enzyme catalyses Hydrolyzes glutaminyl bonds, and activity is further restricted by preferences for the amino acids in P6 - P1' that vary with the species of potyvirus, e.g. Glu-Xaa-Xaa-Tyr-Xaa-Gln-|-(Ser or Gly) for the enzyme from tobacco etch virus. The natural substrate is the viral polyprotein, but other proteins and oligopeptides containing the appropriate consensus sequence are also cleaved.. It carries out the reaction Hydrolyzes a Gly-|-Gly bond at its own C-terminus, commonly in the sequence -Tyr-Xaa-Val-Gly-|-Gly, in the processing of the potyviral polyprotein.. Required for aphid transmission and also has proteolytic activity. Only cleaves a Gly-Gly dipeptide at its own C-terminus. Interacts with virions and aphid stylets. Acts as a suppressor of RNA-mediated gene silencing, also known as post-transcriptional gene silencing (PTGS), a mechanism of plant viral defense that limits the accumulation of viral RNAs. May have RNA-binding activity. Its function is as follows. Has helicase activity. It may be involved in replication. Functionally, indispensable for virus replication. Reduces the abundance of host transcripts related to jasmonic acid biosynthesis therefore altering the host defenses. In order to increase its own stability, decreases host protein degradation pathways. In terms of biological role, indispensable for virus replication. Mediates the cap-independent, EIF4E-dependent translation of viral genomic RNAs. Binds to the cap-binding site of host EIF4E and thus interferes with the host EIF4E-dependent mRNA export and translation. VPg-RNA directly binds EIF4E and is a template for transcription. Also forms trimeric complexes with EIF4E-EIF4G, which are templates for translation. Its function is as follows. Has RNA-binding and proteolytic activities. Functionally, an RNA-dependent RNA polymerase that plays an essential role in the virus replication. In terms of biological role, involved in aphid transmission, cell-to-cell and systemis movement, encapsidation of the viral RNA and in the regulation of viral RNA amplification. The protein is Genome polyprotein of Potato virus Y (strain N) (PVY).